A 417-amino-acid polypeptide reads, in one-letter code: D-galactonate dehydratase family member RspA (417 aa).

The substrate site is built by Gln43 and His127. The active-site Proton donor/acceptor is the Tyr158. Asp223 is a Mg(2+) binding site. The Proton donor/acceptor role is filled by His225. Mg(2+) contacts are provided by Glu249 and Glu275. The substrate site is built by Glu275, Arg296, His325, Asp329, and Glu352.

This sequence belongs to the mandelate racemase/muconate lactonizing enzyme family. GalD subfamily. Mg(2+) is required as a cofactor.

The catalysed reaction is D-gluconate = 2-dehydro-3-deoxy-D-gluconate + H2O. Has low D-gluconate dehydratase activity (in vitro), suggesting that it has no significant role in D-gluconate degradation in vivo. Has no detectable activity with a panel of 70 other acid sugars (in vitro). The chain is D-galactonate dehydratase family member RspA (rspA) from Pantoea ananatis (strain LMG 20103).